We begin with the raw amino-acid sequence, 129 residues long: Serum amyloid A-1 protein (129 aa).

An N-terminal signal peptide occupies residues 1–18; that stretch reads MKLFTGLIFCSLVLGVSS. Residues 19-44 form an important for amyloid formation region; the sequence is QWYSFIGEAAQGAWDMYRAYSDMIEA. Positions 92-129 are disordered; that stretch reads GDSGHGVEDSKADQAANEWGRSGKDPNHFRPPGLPDKY.

Belongs to the SAA family. In terms of assembly, homohexamer; dimer of trimers. Can form amyloid fibrils after partial proteolysis; the native, undenatured protein does not form amyloid fibrils (in vitro). Apolipoprotein of the HDL complex. Binds to heparin. As to expression, detected in liver.

The protein resides in the secreted. In terms of biological role, major acute phase protein. The protein is Serum amyloid A-1 protein (SAA1) of Neovison vison (American mink).